The primary structure comprises 533 residues: Dipeptidase (533 aa).

Cysteine 3 is an active-site residue.

Belongs to the peptidase C69 family.

The catalysed reaction is an L-aminoacyl-L-amino acid + H2O = 2 an L-alpha-amino acid. Functionally, hydrolyzes a wide range of dipeptides. Highest activity against Ala-Gln. This chain is Dipeptidase, found in Bifidobacterium longum (strain NCC 2705).